We begin with the raw amino-acid sequence, 309 residues long: Replication factor C subunit 4 (309 aa).

Residues Val5, Val17, 42 to 50, Asn134, and Arg192 each bind ATP; that span reads GPPGTGKTT.

Belongs to the activator 1 small subunits family. In terms of assembly, component of the replication factor C (RFC) complex.

It localises to the nucleus. Its function is as follows. Component of ATP-dependent clamp loader (RFC and RFC-like) complexes for DNA clamps. During a clamp loading circle, the RFC:clamp complex binds to DNA and the recognition of the double-stranded/single-stranded junction stimulates ATP hydrolysis by RFC. The complex presumably provides bipartite ATP sites in which one subunit supplies a catalytic site for hydrolysis of ATP bound to the neighboring subunit. Dissociation of RFC from the clamp leaves the clamp encircling DNA. Component of the replication factor C (RFC or activator 1) complex which acts during elongation of primed DNA templates by DNA polymerase delta and epsilon. RFC has an essential but redundant activity in sister chromatid cohesion establishment. In Encephalitozoon cuniculi (strain GB-M1) (Microsporidian parasite), this protein is Replication factor C subunit 4 (RFC4).